The following is a 277-amino-acid chain: MSVPTVLERIIARKFQEVAERSAHVSLAELEGLAKAADAPRGFANALIEQAKRKQPAVIAEIKKASPSKGVIREHFVPAEIAVSYEKGGATCLSVLTDVDYFQGADEYLQQARAAVSLPVIRKDFMVDPYQIVEARALGADCVLLIVSALDDVKMAELAATAKDVGLDVLVEVHDGDELERALKTLDTPLVGVNNRNLHTFEVSLETTLDLLPRIPRDRLAITESGILNRADVELMAINEVYSFLVGEAFMRAEQPGLELQRLFFPEQVKKTVQQLD.

Belongs to the TrpC family.

It catalyses the reaction 1-(2-carboxyphenylamino)-1-deoxy-D-ribulose 5-phosphate + H(+) = (1S,2R)-1-C-(indol-3-yl)glycerol 3-phosphate + CO2 + H2O. It functions in the pathway amino-acid biosynthesis; L-tryptophan biosynthesis; L-tryptophan from chorismate: step 4/5. In Pseudomonas putida (strain ATCC 47054 / DSM 6125 / CFBP 8728 / NCIMB 11950 / KT2440), this protein is Indole-3-glycerol phosphate synthase.